We begin with the raw amino-acid sequence, 192 residues long: 7-methyl-GTP pyrophosphatase (192 aa).

The active-site Proton acceptor is aspartate 69.

Belongs to the Maf family. YceF subfamily. A divalent metal cation is required as a cofactor.

The protein localises to the cytoplasm. It carries out the reaction N(7)-methyl-GTP + H2O = N(7)-methyl-GMP + diphosphate + H(+). Nucleoside triphosphate pyrophosphatase that hydrolyzes 7-methyl-GTP (m(7)GTP). May have a dual role in cell division arrest and in preventing the incorporation of modified nucleotides into cellular nucleic acids. This chain is 7-methyl-GTP pyrophosphatase, found in Pseudomonas fluorescens (strain ATCC BAA-477 / NRRL B-23932 / Pf-5).